The sequence spans 1058 residues: Carbamoyl phosphate synthase large chain (1058 aa).

The interval 1–399 (MPIDKDIKKV…AIQKAIRSLD (399 aa)) is carboxyphosphate synthetic domain. Residues Arg127, Arg167, Gly173, Gly174, Glu206, Val208, Glu213, Gly239, Ile240, His241, Gln282, and Glu296 each coordinate ATP. The ATP-grasp 1 domain maps to 131–325 (GHFMDKLNEP…IAKISSKIAL (195 aa)). Residues Gln282, Glu296, and Asn298 each contribute to the Mg(2+) site. The Mn(2+) site is built by Gln282, Glu296, and Asn298. The segment at 400–538 (MGHDGFEYVE…YSTYDSGNEL (139 aa)) is oligomerization domain. A carbamoyl phosphate synthetic domain region spans residues 539–924 (KSSNKKKIVI…YKSQLAAGMD (386 aa)). In terms of domain architecture, ATP-grasp 2 spans 663-856 (AKLLNKLHIH…LAKVATWIMT (194 aa)). ATP is bound by residues Arg699, Lys738, Leu740, Glu745, Gly770, Val771, His772, Ser773, Gln813, and Glu827. Mg(2+)-binding residues include Gln813, Glu827, and Asn829. Mn(2+) is bound by residues Gln813, Glu827, and Asn829. The MGS-like domain maps to 923-1058 (MDLPKEGKIF…KSLNEHIDGE (136 aa)). The interval 925–1058 (LPKEGKIFIS…KSLNEHIDGE (134 aa)) is allosteric domain.

Belongs to the CarB family. In terms of assembly, composed of two chains; the small (or glutamine) chain promotes the hydrolysis of glutamine to ammonia, which is used by the large (or ammonia) chain to synthesize carbamoyl phosphate. Tetramer of heterodimers (alpha,beta)4. The cofactor is Mg(2+). Mn(2+) serves as cofactor.

It carries out the reaction hydrogencarbonate + L-glutamine + 2 ATP + H2O = carbamoyl phosphate + L-glutamate + 2 ADP + phosphate + 2 H(+). The catalysed reaction is hydrogencarbonate + NH4(+) + 2 ATP = carbamoyl phosphate + 2 ADP + phosphate + 2 H(+). The protein operates within amino-acid biosynthesis; L-arginine biosynthesis; carbamoyl phosphate from bicarbonate: step 1/1. It participates in pyrimidine metabolism; UMP biosynthesis via de novo pathway; (S)-dihydroorotate from bicarbonate: step 1/3. In terms of biological role, large subunit of the glutamine-dependent carbamoyl phosphate synthetase (CPSase). CPSase catalyzes the formation of carbamoyl phosphate from the ammonia moiety of glutamine, carbonate, and phosphate donated by ATP, constituting the first step of 2 biosynthetic pathways, one leading to arginine and/or urea and the other to pyrimidine nucleotides. The large subunit (synthetase) binds the substrates ammonia (free or transferred from glutamine from the small subunit), hydrogencarbonate and ATP and carries out an ATP-coupled ligase reaction, activating hydrogencarbonate by forming carboxy phosphate which reacts with ammonia to form carbamoyl phosphate. The protein is Carbamoyl phosphate synthase large chain of Methanobrevibacter smithii (strain ATCC 35061 / DSM 861 / OCM 144 / PS).